The primary structure comprises 305 residues: Urease accessory protein UreD (305 aa).

The protein belongs to the UreD family. UreD, UreF and UreG form a complex that acts as a GTP-hydrolysis-dependent molecular chaperone, activating the urease apoprotein by helping to assemble the nickel containing metallocenter of UreC. The UreE protein probably delivers the nickel.

It is found in the cytoplasm. In terms of biological role, required for maturation of urease via the functional incorporation of the urease nickel metallocenter. The sequence is that of Urease accessory protein UreD from Delftia acidovorans (strain DSM 14801 / SPH-1).